Consider the following 458-residue polypeptide: Delta(8)-fatty-acid desaturase (458 aa).

Positions 16–100 (KKYITSKELK…LKDYQVSDIS (85 aa)) constitute a Cytochrome b5 heme-binding domain. Residues His51 and His74 each contribute to the heme site. 2 helical membrane passes run 122–142 (GVIY…YGVL) and 147–167 (FWIH…IAYL). The Histidine box-1 signature appears at 169 to 173 (HDAGH). A helical transmembrane segment spans residues 185–205 (FAGIFIGNCITGISIAWWKWT). Residues 206–210 (HNAHH) carry the Histidine box-2 motif. 3 consecutive transmembrane segments (helical) span residues 264-284 (YYPI…LLLI), 293-313 (GLNI…VSRL), and 320-340 (VAFV…FTLN). Positions 383 to 387 (QLEHH) match the Histidine box-3 motif.

It belongs to the fatty acid desaturase type 1 family. Fe cation serves as cofactor.

It is found in the membrane. The catalysed reaction is an N-acyl-(4R)-4-hydroxysphinganine + 2 Fe(II)-[cytochrome b5] + O2 + 2 H(+) = a (4R,8E)-4-hydroxysphingenine ceramide + 2 Fe(III)-[cytochrome b5] + 2 H2O. It carries out the reaction an N-acyl-(4R)-4-hydroxysphinganine + 2 Fe(II)-[cytochrome b5] + O2 + 2 H(+) = a (4R,8Z)-4-hydroxysphing-8-enine ceramide + 2 Fe(III)-[cytochrome b5] + 2 H2O. Plays a major role as delta(8)-fatty-acid desaturase which introduces a double bond at the 8-position in the long-chain base (LCB) of ceramides with or without a hydroxy group at the 4-position. The enzyme produces both the 8E and 8Z isomers. This structural modification contributes to the quantitative partitioning of ceramides between the two major sphingolipid classes, glucosylceramides and glycosylinositolphosphoryl ceramides. Sphingolipids are important membrane components involved in environmental stress responses, such as resistance to chilling, and act as cell signaling molecules. The polypeptide is Delta(8)-fatty-acid desaturase (sld1) (Helianthus annuus (Common sunflower)).